The sequence spans 232 residues: Ribose-5-phosphate isomerase A (232 aa).

Substrate is bound by residues 28–31 (TGST), 83–86 (DGAD), and 96–99 (KGGG). Catalysis depends on E105, which acts as the Proton acceptor. K123 is a binding site for substrate.

It belongs to the ribose 5-phosphate isomerase family. In terms of assembly, homodimer.

The enzyme catalyses aldehydo-D-ribose 5-phosphate = D-ribulose 5-phosphate. Its pathway is carbohydrate degradation; pentose phosphate pathway; D-ribose 5-phosphate from D-ribulose 5-phosphate (non-oxidative stage): step 1/1. Catalyzes the reversible conversion of ribose-5-phosphate to ribulose 5-phosphate. In Nitrobacter hamburgensis (strain DSM 10229 / NCIMB 13809 / X14), this protein is Ribose-5-phosphate isomerase A.